A 606-amino-acid chain; its full sequence is Vitamin B12 transporter BtuB (606 aa).

Residues 1 to 21 (MKKTLLAVALAPLCLPSQVFA) form the signal peptide. Residues 28–35 (DVMVVTAN) carry the TonB box motif. The region spanning 40–152 (PIKNVIAPIS…IGGVLNIITA (113 aa)) is the TBDR plug domain. One can recognise a TBDR beta-barrel domain in the interval 157–606 (ESVAEVTAGG…SYYATATYKF (450 aa)). A TonB C-terminal box motif is present at residues 589-606 (ETYNVQERSYYATATYKF).

This sequence belongs to the TonB-dependent receptor family. BtuB (TC 1.B.14.3.1) subfamily.

It is found in the cell outer membrane. Involved in the active translocation of vitamin B12 (cyanocobalamin) across the outer membrane to the periplasmic space. It derives its energy for transport by interacting with the trans-periplasmic membrane protein TonB. The protein is Vitamin B12 transporter BtuB of Photobacterium profundum (strain SS9).